The primary structure comprises 370 residues: Putative agmatine deiminase (370 aa).

Cysteine 361 acts as the Amidino-cysteine intermediate in catalysis.

The protein belongs to the agmatine deiminase family.

The catalysed reaction is agmatine + H2O = N-carbamoylputrescine + NH4(+). The protein is Putative agmatine deiminase of Shewanella putrefaciens (strain CN-32 / ATCC BAA-453).